The chain runs to 206 residues: Translation initiation factor IF-3 (206 aa).

The protein belongs to the IF-3 family. As to quaternary structure, monomer.

It localises to the cytoplasm. Its function is as follows. IF-3 binds to the 30S ribosomal subunit and shifts the equilibrium between 70S ribosomes and their 50S and 30S subunits in favor of the free subunits, thus enhancing the availability of 30S subunits on which protein synthesis initiation begins. The sequence is that of Translation initiation factor IF-3 from Shigella flexneri.